The following is a 401-amino-acid chain: Argininosuccinate synthase (401 aa).

8 to 16 (AYSGGLDTS) is an ATP binding site. Tyr85 is a binding site for L-citrulline. Gly115 contributes to the ATP binding site. Residues Thr117, Asn121, and Asp122 each contribute to the L-aspartate site. Asn121 contacts L-citrulline. Residues Arg125, Ser173, Glu258, and Tyr270 each coordinate L-citrulline.

Belongs to the argininosuccinate synthase family. Type 1 subfamily. Homotetramer.

The protein localises to the cytoplasm. The catalysed reaction is L-citrulline + L-aspartate + ATP = 2-(N(omega)-L-arginino)succinate + AMP + diphosphate + H(+). The protein operates within amino-acid biosynthesis; L-arginine biosynthesis; L-arginine from L-ornithine and carbamoyl phosphate: step 2/3. The polypeptide is Argininosuccinate synthase (Staphylococcus epidermidis (strain ATCC 35984 / DSM 28319 / BCRC 17069 / CCUG 31568 / BM 3577 / RP62A)).